A 195-amino-acid chain; its full sequence is Interferon omega-1 (195 aa).

The segment at residues 1–21 is a signal peptide (or 23 in some molecules); sequence MALLFPLLAALVMTSYSPVGS. 2 cysteine pairs are disulfide-bonded: C24–C122 and C52–C162. N-linked (GlcNAc...) asparagine glycosylation occurs at N101.

The protein belongs to the alpha/beta interferon family.

The protein localises to the secreted. This is Interferon omega-1 (IFNW1) from Homo sapiens (Human).